Reading from the N-terminus, the 751-residue chain is Photosystem I P700 chlorophyll a apoprotein A1 (751 aa).

The next 8 helical transmembrane spans lie at Val-73 to Ala-96, Leu-159 to His-182, Leu-198 to Leu-222, Val-294 to Tyr-312, Trp-349 to Tyr-372, Leu-388 to Val-414, Ala-436 to His-458, and Phe-533 to Leu-551. [4Fe-4S] cluster is bound by residues Cys-575 and Cys-584. Transmembrane regions (helical) follow at residues His-591 to Trp-612 and Leu-665 to Phe-687. His-676 is a binding site for chlorophyll a'. Residues Met-684 and Tyr-692 each contribute to the chlorophyll a site. Trp-693 serves as a coordination point for phylloquinone. A helical membrane pass occupies residues Ala-725–Ala-745.

Belongs to the PsaA/PsaB family. In terms of assembly, the PsaA/B heterodimer binds the P700 chlorophyll special pair and subsequent electron acceptors. PSI consists of a core antenna complex that captures photons, and an electron transfer chain that converts photonic excitation into a charge separation. The eukaryotic PSI reaction center is composed of at least 11 subunits. The cofactor is P700 is a chlorophyll a/chlorophyll a' dimer, A0 is one or more chlorophyll a, A1 is one or both phylloquinones and FX is a shared 4Fe-4S iron-sulfur center..

It localises to the plastid. The protein localises to the chloroplast thylakoid membrane. The catalysed reaction is reduced [plastocyanin] + hnu + oxidized [2Fe-2S]-[ferredoxin] = oxidized [plastocyanin] + reduced [2Fe-2S]-[ferredoxin]. In terms of biological role, psaA and PsaB bind P700, the primary electron donor of photosystem I (PSI), as well as the electron acceptors A0, A1 and FX. PSI is a plastocyanin/cytochrome c6-ferredoxin oxidoreductase, converting photonic excitation into a charge separation, which transfers an electron from the donor P700 chlorophyll pair to the spectroscopically characterized acceptors A0, A1, FX, FA and FB in turn. Oxidized P700 is reduced on the lumenal side of the thylakoid membrane by plastocyanin or cytochrome c6. In Euglena gracilis, this protein is Photosystem I P700 chlorophyll a apoprotein A1.